The sequence spans 484 residues: Cysteine--tRNA ligase (484 aa).

C29 is a Zn(2+) binding site. The 'HIGH' region signature appears at 31-41; sequence PTVQSAPHIGH. Zn(2+)-binding residues include C219, H244, and E248. Residues 275 to 279 carry the 'KMSKS' region motif; the sequence is KMSKS. Residue K278 coordinates ATP.

It belongs to the class-I aminoacyl-tRNA synthetase family. In terms of assembly, monomer. The cofactor is Zn(2+).

The protein localises to the cytoplasm. The catalysed reaction is tRNA(Cys) + L-cysteine + ATP = L-cysteinyl-tRNA(Cys) + AMP + diphosphate. This is Cysteine--tRNA ligase from Clavibacter sepedonicus (Clavibacter michiganensis subsp. sepedonicus).